The sequence spans 291 residues: GTPase Era (291 aa).

An Era-type G domain is found at Lys-2–Glu-167. The G1 stretch occupies residues Gly-10–Ser-17. Gly-10–Ser-17 serves as a coordination point for GTP. Residues Asn-36 to Arg-40 form a G2 region. Positions Asp-57 to Gly-60 are G3. GTP-binding positions include Asp-57 to Leu-61 and Asn-116 to Asp-119. Residues Asn-116 to Asp-119 are G4. The segment at Tyr-146–Ser-148 is G5. The region spanning Tyr-186–Lys-274 is the KH type-2 domain.

The protein belongs to the TRAFAC class TrmE-Era-EngA-EngB-Septin-like GTPase superfamily. Era GTPase family. Monomer.

The protein resides in the cytoplasm. It localises to the cell inner membrane. Its function is as follows. An essential GTPase that binds both GDP and GTP, with rapid nucleotide exchange. Plays a role in 16S rRNA processing and 30S ribosomal subunit biogenesis and possibly also in cell cycle regulation and energy metabolism. The protein is GTPase Era of Campylobacter jejuni subsp. jejuni serotype O:23/36 (strain 81-176).